The sequence spans 537 residues: MEKRLIIAVLLSIGVLYAYSFIFPTPKPLTAPGAKQAAMSSASAPALPAAVAPTAGTAPLAAPAPQAGQAPAVAKDVTVDTDLYTAVFSTQGGGLKKFVLKKYKETVGPQGKDIVLVNETAANRYALLSDSREFGLSPDALYSASTGEVKVTNGGKGSLEFTTTTSQGITFRKVYTFSGDAYRIGLTEEVQNAGNVALTGAVHLLQTSRVVEAKKEGRYEVHAPSTLSEGKVKVDKLDNLLKNPVQYGKDIAWSAFADKYFMDGIIADKGSISQVRITRPANDAIQRDIVSPTVTVAPGQRSAVNYAVYYGPKDLDILKLQGNRLDEVIDYGWFGPIAKPLVHSLKFLYKYTGNYGIAIIIITFILKLVFFPLTHKSYKSMKDMQKLQPKMTELKEKFKNDRDAMNRAVMELYKTHKVNPLGGCLPMVVQIPVFFGLYRALMYSIELRHAPFYLWITDLSAKDPYYVTPIIMGVTMFIQQKMTPTNMDPVQAKMMLMLPIVFTFMFLNFPSGLVIYWLVNNVLTIAQQMYINKAVAD.

The next 4 helical transmembrane spans lie at 5-25 (LIIAVLLSIGVLYAYSFIFPT), 353-373 (GNYGIAIIIITFILKLVFFPL), 418-438 (VNPLGGCLPMVVQIPVFFGLY), and 495-515 (MLMLPIVFTFMFLNFPSGLVI).

Belongs to the OXA1/ALB3/YidC family. Type 1 subfamily. As to quaternary structure, interacts with the Sec translocase complex via SecD. Specifically interacts with transmembrane segments of nascent integral membrane proteins during membrane integration.

Its subcellular location is the cell inner membrane. Required for the insertion and/or proper folding and/or complex formation of integral membrane proteins into the membrane. Involved in integration of membrane proteins that insert both dependently and independently of the Sec translocase complex, as well as at least some lipoproteins. Aids folding of multispanning membrane proteins. This chain is Membrane protein insertase YidC, found in Citrifermentans bemidjiense (strain ATCC BAA-1014 / DSM 16622 / JCM 12645 / Bem) (Geobacter bemidjiensis).